A 235-amino-acid chain; its full sequence is Orotidine 5'-phosphate decarboxylase (235 aa).

Substrate is bound by residues D17, K39, 66-75 (DLKLHDIGNT), T121, R182, Q191, G211, and R212. K68 serves as the catalytic Proton donor.

This sequence belongs to the OMP decarboxylase family. Type 1 subfamily. As to quaternary structure, homodimer.

The catalysed reaction is orotidine 5'-phosphate + H(+) = UMP + CO2. Its pathway is pyrimidine metabolism; UMP biosynthesis via de novo pathway; UMP from orotate: step 2/2. Functionally, catalyzes the decarboxylation of orotidine 5'-monophosphate (OMP) to uridine 5'-monophosphate (UMP). The protein is Orotidine 5'-phosphate decarboxylase of Rhodopseudomonas palustris (strain HaA2).